Reading from the N-terminus, the 439-residue chain is High-energy light unresponsive protein 1 (439 aa).

Residues 1 to 67 lie on the Cytoplasmic side of the membrane; the sequence is MPPPSSHSNI…LGLNQSIRPN (67 aa). A helical membrane pass occupies residues 68 to 88; it reads NSLLFRIYSWLVFCLLLFTTL. At 89-114 the chain is on the extracellular side; it reads RKFNQVGVRPNGTRENLQEFFANPRS. The chain crosses the membrane as a helical span at residues 115–135; sequence MITLCNALIMLSGLLASLQLY. At 136–164 the chain is on the cytoplasmic side; sequence TLGAKRLKPLKILCQFSLNVRTKQAERRQ. A helical membrane pass occupies residues 165 to 185; the sequence is FMINTFLAVFSGLLALTMAAT. Topologically, residues 186–211 are extracellular; it reads YAMSKWGYILYIVGTPNLDTETIFCV. The helical transmembrane segment at 212–232 threads the bilayer; sequence LLDSYALFVSRAAISALAILF. The Cytoplasmic segment spans residues 233-290; it reads YQHCSVIRRSIKHLINEMVPAEQDECPLPESSLQKIHDCQISYQRIFNGKAVIEEYYS. The helical transmembrane segment at 291–311 threads the bilayer; sequence FVLFYSYGVCIPIFCFLMFVG. The Extracellular portion of the chain corresponds to 312–324; that stretch reads MSAQSICWSEVVS. Residues 325 to 345 form a helical membrane-spanning segment; the sequence is IVIWIVNAILVLLLFSLPAFM. The Cytoplasmic portion of the chain corresponds to 346–402; that stretch reads INEDGDRLVASSFRMYHETFHEERDLTVLSQMTFFTFQIHSTKLTLSACNYFYMDRS. Residues 403-423 form a helical membrane-spanning segment; the sequence is ILLSLFSAILTYFLILWEFDI. The Extracellular segment spans residues 424–439; it reads KNNQSLQNIANHTIHT.

The protein belongs to the insect chemoreceptor superfamily. Gustatory receptor (GR) family. In terms of tissue distribution, expressed in the AVG and PVT neurons of the tail.

It is found in the cell membrane. Its function is as follows. Photoreceptor for short wavelength (UV) light that mediates UV-light-induced avoidance behavior. Directly senses and absorbs both UV-A and UV-B light with very high efficiency. Absorption of UV-B but not UV-A light shows resistance to photobleaching. In contrast to other photoreceptors, does not use a prosthetic chromophore to capture photons and only depends on its protein conformation. Might have a role in response to white light exposure. The chain is High-energy light unresponsive protein 1 from Caenorhabditis elegans.